The sequence spans 147 residues: Large ribosomal subunit protein bL9 (147 aa).

Belongs to the bacterial ribosomal protein bL9 family.

Functionally, binds to the 23S rRNA. This is Large ribosomal subunit protein bL9 from Bacteroides fragilis (strain YCH46).